A 227-amino-acid chain; its full sequence is Ubiquitin domain-containing protein 1 (227 aa).

A disordered region spans residues 1 to 42 (MGNCVGRQRRERPAAPGHPRKRAGRNEPLKKERLKWKSDYPM). Basic and acidic residues predominate over residues 24–38 (GRNEPLKKERLKWKS). The Ubiquitin-like domain maps to 149–224 (FPLKVRLSTG…IQVIINQPPP (76 aa)).

Interacts with UBTD1.

Its function is as follows. May be involved in the regulation of cellular senescence through a positive feedback loop with TP53. Is a TP53 downstream target gene that increases the stability of TP53 protein by promoting the ubiquitination and degradation of MDM2. This is Ubiquitin domain-containing protein 1 (Ubtd1) from Mus musculus (Mouse).